A 150-amino-acid polypeptide reads, in one-letter code: Large ribosomal subunit protein bL9 (150 aa).

The protein belongs to the bacterial ribosomal protein bL9 family.

Functionally, binds to the 23S rRNA. This Streptococcus pyogenes serotype M3 (strain SSI-1) protein is Large ribosomal subunit protein bL9.